Reading from the N-terminus, the 553-residue chain is Phospholipase B (553 aa).

The N-terminal stretch at 1–35 is a signal peptide; the sequence is MIRFGNPSSSDKRRQRCRSWYWGGLLLLWAVAETR. 3 N-linked (GlcNAc...) asparagine glycosylation sites follow: N313, N416, and N531.

The protein belongs to the phospholipase B-like family. In terms of tissue distribution, expressed by the venom gland.

Its subcellular location is the secreted. In terms of biological role, may cause hemolysis or may be involved in protein folding and translation. The protein is Phospholipase B of Crotalus adamanteus (Eastern diamondback rattlesnake).